The primary structure comprises 113 residues: Hydrogenase maturation factor HypA (113 aa).

Residue histidine 2 participates in Ni(2+) binding. Zn(2+) is bound by residues cysteine 73, cysteine 76, cysteine 89, and cysteine 92.

Belongs to the HypA/HybF family.

Involved in the maturation of [NiFe] hydrogenases. Required for nickel insertion into the metal center of the hydrogenase. The chain is Hydrogenase maturation factor HypA from Xanthobacter autotrophicus (strain ATCC BAA-1158 / Py2).